Reading from the N-terminus, the 297-residue chain is N-acetylneuraminate lyase (297 aa).

Aceneuramate contacts are provided by S47 and T48. Catalysis depends on Y137, which acts as the Proton donor. K165 functions as the Schiff-base intermediate with substrate in the catalytic mechanism. T167, G189, D191, E192, and S208 together coordinate aceneuramate.

It belongs to the DapA family. NanA subfamily. Homotetramer.

The protein resides in the cytoplasm. The catalysed reaction is aceneuramate = aldehydo-N-acetyl-D-mannosamine + pyruvate. It participates in amino-sugar metabolism; N-acetylneuraminate degradation; D-fructose 6-phosphate from N-acetylneuraminate: step 1/5. In terms of biological role, catalyzes the reversible aldol cleavage of N-acetylneuraminic acid (sialic acid; Neu5Ac) to form pyruvate and N-acetylmannosamine (ManNAc) via a Schiff base intermediate. This is N-acetylneuraminate lyase from Salmonella typhimurium (strain LT2 / SGSC1412 / ATCC 700720).